The sequence spans 227 residues: Cytochrome c oxidase subunit 2 (227 aa).

Residues 1–14 (MAHATQVGLQDATS) are Mitochondrial intermembrane-facing. A helical transmembrane segment spans residues 15–45 (PIMEELISFHDHALMIIFLISFLVLYALFLT). The Mitochondrial matrix segment spans residues 46-59 (LTTKLTNTNITDAQ). Residues 60 to 87 (EMETVWTILPAIILVLIALPSLRILYLT) traverse the membrane as a helical segment. The Mitochondrial intermembrane portion of the chain corresponds to 88–227 (DEINDPSFTI…IFEMGPVFTL (140 aa)). Positions 161, 196, 198, 200, 204, and 207 each coordinate Cu cation. Glutamate 198 is a Mg(2+) binding site.

This sequence belongs to the cytochrome c oxidase subunit 2 family. In terms of assembly, component of the cytochrome c oxidase (complex IV, CIV), a multisubunit enzyme composed of 14 subunits. The complex is composed of a catalytic core of 3 subunits MT-CO1, MT-CO2 and MT-CO3, encoded in the mitochondrial DNA, and 11 supernumerary subunits COX4I, COX5A, COX5B, COX6A, COX6B, COX6C, COX7A, COX7B, COX7C, COX8 and NDUFA4, which are encoded in the nuclear genome. The complex exists as a monomer or a dimer and forms supercomplexes (SCs) in the inner mitochondrial membrane with NADH-ubiquinone oxidoreductase (complex I, CI) and ubiquinol-cytochrome c oxidoreductase (cytochrome b-c1 complex, complex III, CIII), resulting in different assemblies (supercomplex SCI(1)III(2)IV(1) and megacomplex MCI(2)III(2)IV(2)). Found in a complex with TMEM177, COA6, COX18, COX20, SCO1 and SCO2. Interacts with TMEM177 in a COX20-dependent manner. Interacts with COX20. Interacts with COX16. Cu cation serves as cofactor.

It localises to the mitochondrion inner membrane. It catalyses the reaction 4 Fe(II)-[cytochrome c] + O2 + 8 H(+)(in) = 4 Fe(III)-[cytochrome c] + 2 H2O + 4 H(+)(out). In terms of biological role, component of the cytochrome c oxidase, the last enzyme in the mitochondrial electron transport chain which drives oxidative phosphorylation. The respiratory chain contains 3 multisubunit complexes succinate dehydrogenase (complex II, CII), ubiquinol-cytochrome c oxidoreductase (cytochrome b-c1 complex, complex III, CIII) and cytochrome c oxidase (complex IV, CIV), that cooperate to transfer electrons derived from NADH and succinate to molecular oxygen, creating an electrochemical gradient over the inner membrane that drives transmembrane transport and the ATP synthase. Cytochrome c oxidase is the component of the respiratory chain that catalyzes the reduction of oxygen to water. Electrons originating from reduced cytochrome c in the intermembrane space (IMS) are transferred via the dinuclear copper A center (CU(A)) of subunit 2 and heme A of subunit 1 to the active site in subunit 1, a binuclear center (BNC) formed by heme A3 and copper B (CU(B)). The BNC reduces molecular oxygen to 2 water molecules using 4 electrons from cytochrome c in the IMS and 4 protons from the mitochondrial matrix. This Hylobates lar (Lar gibbon) protein is Cytochrome c oxidase subunit 2 (MT-CO2).